The following is a 114-amino-acid chain: Ribonuclease P protein component (114 aa).

It belongs to the RnpA family. Consists of a catalytic RNA component (M1 or rnpB) and a protein subunit.

It catalyses the reaction Endonucleolytic cleavage of RNA, removing 5'-extranucleotides from tRNA precursor.. RNaseP catalyzes the removal of the 5'-leader sequence from pre-tRNA to produce the mature 5'-terminus. It can also cleave other RNA substrates such as 4.5S RNA. The protein component plays an auxiliary but essential role in vivo by binding to the 5'-leader sequence and broadening the substrate specificity of the ribozyme. In Staphylococcus haemolyticus (strain JCSC1435), this protein is Ribonuclease P protein component.